The primary structure comprises 268 residues: Type II methyltransferase M2.DpnII (268 aa).

This sequence belongs to the N(4)/N(6)-methyltransferase family. In terms of assembly, homodimer.

It carries out the reaction a 2'-deoxyadenosine in DNA + S-adenosyl-L-methionine = an N(6)-methyl-2'-deoxyadenosine in DNA + S-adenosyl-L-homocysteine + H(+). In terms of biological role, a beta subtype methylase that recognizes the single- or double-stranded sequence 5'-GATC-3', methylates A-2 on one or both strands (respectively), and protects the DNA from cleavage by the DpnII endonuclease. Further methylates DNA that is already methylated at 5'-GATC-3' sites. Essential for establishment of a previously unmethylated plasmid transformed into the cell as single-stranded DNA, enhances plasmid transfer to DpnII-containing strains of Streptococcus pneumoniae. This is Type II methyltransferase M2.DpnII from Streptococcus pneumoniae.